We begin with the raw amino-acid sequence, 235 residues long: AA9 family lytic polysaccharide monooxygenase D (235 aa).

The signal sequence occupies residues 1-18 (MKAFFAVLAVVSAPFVLG). Histidine 19 lines the Cu(2+) pocket. Serine 29 carries an O-linked (Man...) serine glycan. Cysteine 61 and cysteine 181 are joined by a disulfide. Histidine 94 serves as a coordination point for Cu(2+). Histidine 167 and glutamine 176 together coordinate O2. Tyrosine 178 is a Cu(2+) binding site. Asparagine 221 is a glycosylation site (N-linked (GlcNAc...) asparagine).

This sequence belongs to the polysaccharide monooxygenase AA9 family. The cofactor is Cu(2+).

The protein localises to the secreted. The enzyme catalyses [(1-&gt;4)-beta-D-glucosyl]n+m + reduced acceptor + O2 = 4-dehydro-beta-D-glucosyl-[(1-&gt;4)-beta-D-glucosyl]n-1 + [(1-&gt;4)-beta-D-glucosyl]m + acceptor + H2O.. In terms of biological role, lytic polysaccharide monooxygenase (LPMO) that depolymerizes crystalline and amorphous polysaccharides via the oxidation of scissile alpha- or beta-(1-4)-glycosidic bonds, yielding only C1 oxidation products. Catalysis by LPMOs requires the reduction of the active-site copper from Cu(II) to Cu(I) by a reducing agent and H(2)O(2) or O(2) as a cosubstrate. The protein is AA9 family lytic polysaccharide monooxygenase D of Phanerodontia chrysosporium (White-rot fungus).